Consider the following 234-residue polypeptide: MAVVSLSEMMEAGAHFGHQTRRWNPKMSKYIYCARNGVHIIDLVKTALCMNNAYKWTRNAAKSGKRFLFVGTKKQASDVVAQEAVRCGAAYVNQRWLGGMLTNWSTMKARIERLKDLERMESSGAIAMRPKKEAAVLRRELERLQKYLGGLKGMRRLPDVVVLVDQRRESNAVLEARKLDISLVSMLDTNCDPDLCEVPIPCNDDAVRSVQLILGRLADAINEGRKGSNDQRKV.

The protein belongs to the universal ribosomal protein uS2 family.

This chain is Small ribosomal subunit protein uS2, found in Prochlorococcus marinus (strain MIT 9515).